Consider the following 156-residue polypeptide: Ribosomal RNA large subunit methyltransferase H (156 aa).

Residues L73, G104, and 123–128 (LSPLTL) each bind S-adenosyl-L-methionine.

The protein belongs to the RNA methyltransferase RlmH family. As to quaternary structure, homodimer.

It localises to the cytoplasm. It carries out the reaction pseudouridine(1915) in 23S rRNA + S-adenosyl-L-methionine = N(3)-methylpseudouridine(1915) in 23S rRNA + S-adenosyl-L-homocysteine + H(+). Its function is as follows. Specifically methylates the pseudouridine at position 1915 (m3Psi1915) in 23S rRNA. The protein is Ribosomal RNA large subunit methyltransferase H of Serratia proteamaculans (strain 568).